Consider the following 258-residue polypeptide: Phycoerythrobilin:ferredoxin oxidoreductase (258 aa).

It belongs to the HY2 family.

The catalysed reaction is (3Z)-phycoerythrobilin + oxidized 2[4Fe-4S]-[ferredoxin] = 15,16-dihydrobiliverdin + reduced 2[4Fe-4S]-[ferredoxin] + 2 H(+). Catalyzes the two-electron reduction of the C2 and C3(1) diene system of 15,16-dihydrobiliverdin. The sequence is that of Phycoerythrobilin:ferredoxin oxidoreductase from Prochlorococcus marinus (strain NATL2A).